The chain runs to 89 residues: Large ribosomal subunit protein bL27 (89 aa).

The segment at 1–21 (MAHKKAGGSSRNGRDSKGKRL) is disordered.

It belongs to the bacterial ribosomal protein bL27 family.

This is Large ribosomal subunit protein bL27 from Bradyrhizobium diazoefficiens (strain JCM 10833 / BCRC 13528 / IAM 13628 / NBRC 14792 / USDA 110).